We begin with the raw amino-acid sequence, 553 residues long: MAKLLKFSDESRAALERGMNALADAVRVTIGPRGRNVVLEKSFGAPDIVNDGDTIAKEIDLEDPFENIGAKLIQQVASKTKDKAGDGTTTATVLAQAMVEEGLRNTAAGASPIELRRGMEKAVALIVKGLGERSQSVSGDAIRQVATVSAGGDDEVGRMVAEAMDKVTVDGVITVEESKSLATELEVTEGMAFDRGYSSPYFVTDGDRQICEFENALLLLTDRKISAVADLVPVLETVQKTGSPLVILAEEVDGEALATLVVNKNRGVLQVAAVRAPSFGERRKAALADIAILTGGTVISEDRAMTLDKVTLEDLGRARRITISKEETTIVASEDSRDAVAERVASIRRELENSDSEYDREKLNERIAKLAGGVAVIKVGAPTETELKNRKLRIEDALNATRAAVEEGIVAGGGSTLIQLAGSLDGLANQLHGDQRTGVEIVHRALSAPLRQIAINAGANGDVVVEQVQRSGQGFNALTGGYENLLEAGILDAAKVVRLGLQDAVSIASLLITTEVVVADKPEPPAAPAPGGDPMGGMGGMGGMGGMGMPGMM.

ATP contacts are provided by residues 29–32, 86–90, G413, 476–478, and D492; these read TIGP, DGTTT, and NAL. Residues 521 to 542 form a disordered region; the sequence is KPEPPAAPAPGGDPMGGMGGMG. Residues 533 to 542 show a composition bias toward gly residues; that stretch reads DPMGGMGGMG.

The protein belongs to the chaperonin (HSP60) family. Forms a cylinder of 14 subunits composed of two heptameric rings stacked back-to-back. Interacts with the co-chaperonin GroES.

The protein resides in the cytoplasm. It catalyses the reaction ATP + H2O + a folded polypeptide = ADP + phosphate + an unfolded polypeptide.. Together with its co-chaperonin GroES, plays an essential role in assisting protein folding. The GroEL-GroES system forms a nano-cage that allows encapsulation of the non-native substrate proteins and provides a physical environment optimized to promote and accelerate protein folding. This is Chaperonin GroEL 1 from Synechococcus sp. (strain WH7803).